The primary structure comprises 540 residues: Coiled-coil domain-containing protein 116 (540 aa).

Positions 79–102 (QVLDSLQTVVEQATECVATMKTEA) form a coiled coil. Positions 347–400 (PGNSDLQPSSKASLPTDREARGETCYSPTSASSPKTSHRKSKDRRGSPSNAVQM) are disordered. 2 stretches are compositionally biased toward polar residues: residues 350–359 (SDLQPSSKAS) and 372–381 (YSPTSASSPK). Position 393 is a phosphoserine (serine 393).

The protein localises to the cytoplasm. The protein resides in the cytoskeleton. It localises to the microtubule organizing center. Its subcellular location is the centrosome. In Rattus norvegicus (Rat), this protein is Coiled-coil domain-containing protein 116 (Ccdc116).